We begin with the raw amino-acid sequence, 314 residues long: Mitochondrial thiamine pyrophosphate carrier 1 (314 aa).

The next 6 membrane-spanning stretches (helical) occupy residues 14-30 (VAAWKTLLAGAVSGLLA), 84-100 (LLYVTYGSAQFSSYSLF), 116-136 (LVVGAFAGITSSIVSYPFDVL), 170-186 (GSIASMTTITLTASIMF), 217-233 (SAGTIGGVIAKIITFPL), and 285-302 (GILVALSKTIPTTFVSFW). 3 Solcar repeats span residues 14 to 103 (VAAW…FNRY), 110 to 195 (EARL…IRIY), and 210 to 310 (ELAT…AIHY).

It belongs to the mitochondrial carrier (TC 2.A.29) family.

Its subcellular location is the mitochondrion inner membrane. Its function is as follows. Mitochondrial transporter that mediates uptake of thiamine pyrophosphate (ThPP) into mitochondria. The sequence is that of Mitochondrial thiamine pyrophosphate carrier 1 (TPC1) from Saccharomyces cerevisiae (strain ATCC 204508 / S288c) (Baker's yeast).